The chain runs to 459 residues: Transcription factor 7-like 2 (459 aa).

The span at Met-1 to Asp-11 shows a compositional bias: gly residues. Positions Met-1 to Glu-53 are CTNNB1-binding. Positions Met-1 to Lys-96 are disordered. Positions Ile-19–Asp-43 are enriched in basic and acidic residues. Residue Lys-22 forms a Glycyl lysine isopeptide (Lys-Gly) (interchain with G-Cter in SUMO2) linkage. A compositionally biased stretch (polar residues) spans Ser-47–Gln-56. The span at Glu-63 to Asp-91 shows a compositional bias: basic and acidic residues. Phosphothreonine; by NLK is present on residues Thr-178 and Thr-189. The mediates interaction with MAD2L2 stretch occupies residues Thr-178 to Glu-372. Positions Thr-295–Val-305 are enriched in polar residues. Disordered regions lie at residues Thr-295–Ile-327 and Arg-397–His-418. Lys-297 is covalently cross-linked (Glycyl lysine isopeptide (Lys-Gly) (interchain with G-Cter in SUMO)). Residues Lys-312–Lys-323 show a composition bias toward basic and acidic residues. A DNA-binding region (HMG box) is located at residues Ile-327 to Ser-395. The Nuclear localization signal motif lies at Lys-402 to Arg-408.

This sequence belongs to the TCF/LEF family. As to quaternary structure, interacts with TGFB1I1. Interacts with SPIN1. Interacts with CTNNB1 (via the armadillo repeat); forms stable transcription complex. Interacts with EP300. Interacts with NLK. Interacts with CCDC85B (probably through the HMG box); prevents interaction with CTNNB1. Interacts with TNIK. Interacts with MAD2L2; prevents TCF7L2/TCF4 binding to promZIPK/DAPK3oters, negatively modulating its transcriptional activity. Interacts with ZIPK/DAPK3. Interacts with XIAP/BIRC4 and TLE3. Interacts with DDIT3/CHOP. The CTNNB1 and TCF7L2/TCF4 complex interacts with PML (isoform PML-4). Identified in a complex with CTNNB1 and FERMT2. Interacts with C11orf84/SPINDOC in a SPIN1-dependent manner. Interacts with DAZAP2; the interaction results in localization of DAZAP2 to the nucleus. Phosphorylated at Thr-178 and/or Thr-189 by NLK. Phosphorylation by NLK at these sites inhibits DNA-binding by TCF7L2/TCF4, thereby preventing transcriptional activation of target genes of the canonical Wnt/beta-catenin signaling pathway. In terms of processing, polysumoylated. Sumoylation is enhanced by PIAS family members and desumoylation is enhanced by SENP2. Sumoylation/desumoylation regulates TCF7L2/TCF4 transcription activity in the Wnt/beta-catenin signaling pathway without altering interaction with CTNNB1 nor binding to DNA. As to expression, detected in adult brain and liver, and at lower levels in intestine, with a clear increase from the distal colon to the duodenum. Detected at low levels in heart, lung, kidney, pituitary and testis.

The protein resides in the nucleus. It localises to the PML body. Participates in the Wnt signaling pathway and modulates MYC expression by binding to its promoter in a sequence-specific manner. Acts as a repressor in the absence of CTNNB1, and as activator in its presence. Activates transcription from promoters with several copies of the Tcf motif CCTTTGATC in the presence of CTNNB1. TLE1, TLE2, TLE3 and TLE4 repress transactivation mediated by TCF7L2/TCF4 and CTNNB1. Expression of dominant-negative mutants results in cell-cycle arrest in G1. Necessary for the maintenance of the epithelial stem-cell compartment of the small intestine. This Mus musculus (Mouse) protein is Transcription factor 7-like 2 (Tcf7l2).